The primary structure comprises 164 residues: R-phycoerythrin alpha chain (164 aa).

Asn47, Lys81, Cys82, Arg84, His88, Arg137, Cys139, and Arg142 together coordinate (2R,3E)-phycoerythrobilin.

The protein belongs to the phycobiliprotein family. In terms of assembly, heterododecamer of 6 alpha and 6 beta chains. The basic functional unit of phycobiliproteins is a ring-shaped hexamer formed from two back-to-back trimers contacting via the alpha chain subunits. The trimers are composed of alpha/beta subunit heterodimers arranged around a three-fold axis of symmetry. The phycoerythrins also contain a gamma subunit which is located in the center of the hexamer. In terms of processing, contains two covalently linked phycoerythrobilin chromophores.

The protein localises to the plastid. The protein resides in the chloroplast thylakoid membrane. Its function is as follows. Light-harvesting photosynthetic tetrapyrrole chromophore-protein from the phycobiliprotein complex. This Agarophyton chilense (Red seaweed) protein is R-phycoerythrin alpha chain (rpeA).